Reading from the N-terminus, the 242-residue chain is Probable L-ribulose-5-phosphate 4-epimerase UlaF (242 aa).

Substrate is bound by residues 31 to 32, 48 to 49, and 78 to 79; these read GN, SG, and SS. Positions 80, 99, and 101 each coordinate Zn(2+). The active-site Proton donor/acceptor is aspartate 124. Residue histidine 175 participates in Zn(2+) binding. Residue tyrosine 234 is the Proton donor/acceptor of the active site.

Belongs to the aldolase class II family. AraD/FucA subfamily. Requires Zn(2+) as cofactor.

The catalysed reaction is L-ribulose 5-phosphate = D-xylulose 5-phosphate. It functions in the pathway cofactor degradation; L-ascorbate degradation; D-xylulose 5-phosphate from L-ascorbate: step 4/4. In terms of biological role, catalyzes the isomerization of L-ribulose 5-phosphate to D-xylulose 5-phosphate. Is involved in the anaerobic L-ascorbate utilization. The sequence is that of Probable L-ribulose-5-phosphate 4-epimerase UlaF from Mycoplasma pneumoniae (strain ATCC 29342 / M129 / Subtype 1) (Mycoplasmoides pneumoniae).